A 244-amino-acid polypeptide reads, in one-letter code: Protein-L-isoaspartate O-methyltransferase (244 aa).

The segment at 1 to 39 (MINPFSSFRWRHSSRSPAGIPEVEPQPPDASDPFASQRE) is disordered. Ser-92 is a catalytic residue.

The protein belongs to the methyltransferase superfamily. L-isoaspartyl/D-aspartyl protein methyltransferase family.

It is found in the cytoplasm. It catalyses the reaction [protein]-L-isoaspartate + S-adenosyl-L-methionine = [protein]-L-isoaspartate alpha-methyl ester + S-adenosyl-L-homocysteine. Functionally, catalyzes the methyl esterification of L-isoaspartyl residues in peptides and proteins that result from spontaneous decomposition of normal L-aspartyl and L-asparaginyl residues. It plays a role in the repair and/or degradation of damaged proteins. In Synechococcus sp. (strain JA-2-3B'a(2-13)) (Cyanobacteria bacterium Yellowstone B-Prime), this protein is Protein-L-isoaspartate O-methyltransferase.